The sequence spans 308 residues: Mitochondrial import receptor subunit TOM40B (308 aa).

Residues P281 to G308 form a required for mitochondrial targeting region.

Belongs to the Tom40 family. Forms part of the preprotein translocase of the outer mitochondrial membrane (TOM complex) containing TOMM22, TOMM40, TOMM40L and TOMM70. Interacts with mitochondrial targeting sequences. In terms of tissue distribution, widely expressed. Higher levels in heart, brain and liver, very low level in testis.

It localises to the mitochondrion outer membrane. Functionally, potential channel-forming protein implicated in import of protein precursors into mitochondria. The polypeptide is Mitochondrial import receptor subunit TOM40B (Rattus norvegicus (Rat)).